An 88-amino-acid chain; its full sequence is Small ribosomal subunit protein bS20 (88 aa).

Basic and acidic residues predominate over residues 1–11 (MANIKSSEKDI). Disordered regions lie at residues 1-31 (MANI…LRTQ) and 69-88 (SKNA…SSAA).

This sequence belongs to the bacterial ribosomal protein bS20 family.

In terms of biological role, binds directly to 16S ribosomal RNA. This Leptospira interrogans serogroup Icterohaemorrhagiae serovar copenhageni (strain Fiocruz L1-130) protein is Small ribosomal subunit protein bS20.